Reading from the N-terminus, the 300-residue chain is uncharacterized protein (300 aa).

This is an uncharacterized protein from Methanocaldococcus jannaschii (strain ATCC 43067 / DSM 2661 / JAL-1 / JCM 10045 / NBRC 100440) (Methanococcus jannaschii).